The sequence spans 408 residues: S-adenosylmethionine:tRNA ribosyltransferase-isomerase (408 aa).

The protein belongs to the QueA family. In terms of assembly, monomer.

It localises to the cytoplasm. It catalyses the reaction 7-aminomethyl-7-carbaguanosine(34) in tRNA + S-adenosyl-L-methionine = epoxyqueuosine(34) in tRNA + adenine + L-methionine + 2 H(+). It functions in the pathway tRNA modification; tRNA-queuosine biosynthesis. In terms of biological role, transfers and isomerizes the ribose moiety from AdoMet to the 7-aminomethyl group of 7-deazaguanine (preQ1-tRNA) to give epoxyqueuosine (oQ-tRNA). In Trichormus variabilis (strain ATCC 29413 / PCC 7937) (Anabaena variabilis), this protein is S-adenosylmethionine:tRNA ribosyltransferase-isomerase.